The following is a 177-amino-acid chain: Copper-binding regulatory protein cuf2 (177 aa).

Residues 1-40 (MIIIDGKNYACVVCLRGHRGSSCQHQERALIEVRTRGRPL) constitute a DNA-binding region (copper-fist). Zn(2+) contacts are provided by cysteine 11, cysteine 14, cysteine 23, and histidine 25.

It localises to the nucleus. The protein is Copper-binding regulatory protein cuf2 (cuf2) of Schizosaccharomyces pombe (strain 972 / ATCC 24843) (Fission yeast).